Reading from the N-terminus, the 209-residue chain is Dual specificity phosphatase 29 (209 aa).

The Tyrosine-protein phosphatase domain maps to 45-193 (HVNEVWPNLY…LRELDIKLAL (149 aa)). 137-144 (NCAMGRSR) is a substrate binding site. Cys-138 functions as the Phosphocysteine intermediate in the catalytic mechanism.

It belongs to the protein-tyrosine phosphatase family. Non-receptor class dual specificity subfamily.

Its subcellular location is the cytoplasm. The protein resides in the nucleus. It carries out the reaction O-phospho-L-tyrosyl-[protein] + H2O = L-tyrosyl-[protein] + phosphate. The catalysed reaction is O-phospho-L-seryl-[protein] + H2O = L-seryl-[protein] + phosphate. The enzyme catalyses O-phospho-L-threonyl-[protein] + H2O = L-threonyl-[protein] + phosphate. Functionally, dual specificity phosphatase able to dephosphorylate phosphotyrosine, phosphoserine and phosphothreonine residues, with a preference for phosphotyrosine as a substrate. Dual specificity phosphatase able to dephosphorylate phosphotyrosine, phosphoserine and phosphothreonine residues within the same substrate, with a preference for phosphotyrosine as a substrate. Involved in the modulation of AMPK and MAPK1/2 signaling pathway. The sequence is that of Dual specificity phosphatase 29 (dusp29) from Xenopus laevis (African clawed frog).